The chain runs to 119 residues: Large ribosomal subunit protein uL18 (119 aa).

It belongs to the universal ribosomal protein uL18 family. As to quaternary structure, part of the 50S ribosomal subunit; part of the 5S rRNA/L5/L18/L25 subcomplex. Contacts the 5S and 23S rRNAs.

Functionally, this is one of the proteins that bind and probably mediate the attachment of the 5S RNA into the large ribosomal subunit, where it forms part of the central protuberance. In Borreliella afzelii (strain PKo) (Borrelia afzelii), this protein is Large ribosomal subunit protein uL18.